A 104-amino-acid polypeptide reads, in one-letter code: Large ribosomal subunit protein uL24 (104 aa).

The protein belongs to the universal ribosomal protein uL24 family. In terms of assembly, part of the 50S ribosomal subunit.

Functionally, one of two assembly initiator proteins, it binds directly to the 5'-end of the 23S rRNA, where it nucleates assembly of the 50S subunit. Its function is as follows. One of the proteins that surrounds the polypeptide exit tunnel on the outside of the subunit. The protein is Large ribosomal subunit protein uL24 of Shewanella loihica (strain ATCC BAA-1088 / PV-4).